We begin with the raw amino-acid sequence, 231 residues long: Large ribosomal subunit protein uL1 (231 aa).

It belongs to the universal ribosomal protein uL1 family. As to quaternary structure, part of the 50S ribosomal subunit.

In terms of biological role, binds directly to 23S rRNA. The L1 stalk is quite mobile in the ribosome, and is involved in E site tRNA release. Functionally, protein L1 is also a translational repressor protein, it controls the translation of the L11 operon by binding to its mRNA. The chain is Large ribosomal subunit protein uL1 from Hydrogenovibrio crunogenus (strain DSM 25203 / XCL-2) (Thiomicrospira crunogena).